The primary structure comprises 532 residues: Light-independent protochlorophyllide reductase subunit B (532 aa).

A [4Fe-4S] cluster-binding site is contributed by Asp-36. The active-site Proton donor is Asp-318. Position 453–454 (453–454) interacts with substrate; that stretch reads GM.

Belongs to the ChlB/BchB/BchZ family. In terms of assembly, protochlorophyllide reductase is composed of three subunits; ChlL, ChlN and ChlB. Forms a heterotetramer of two ChlB and two ChlN subunits. [4Fe-4S] cluster serves as cofactor.

It is found in the plastid. Its subcellular location is the chloroplast. It carries out the reaction chlorophyllide a + oxidized 2[4Fe-4S]-[ferredoxin] + 2 ADP + 2 phosphate = protochlorophyllide a + reduced 2[4Fe-4S]-[ferredoxin] + 2 ATP + 2 H2O. It functions in the pathway porphyrin-containing compound metabolism; chlorophyll biosynthesis (light-independent). Component of the dark-operative protochlorophyllide reductase (DPOR) that uses Mg-ATP and reduced ferredoxin to reduce ring D of protochlorophyllide (Pchlide) to form chlorophyllide a (Chlide). This reaction is light-independent. The NB-protein (ChlN-ChlB) is the catalytic component of the complex. This is Light-independent protochlorophyllide reductase subunit B from Tetradesmus obliquus (Green alga).